The following is a 405-amino-acid chain: uncharacterized protein (405 aa).

The Cytoplasmic segment spans residues 1 to 18 (MPEPVAEPALNGLRLNLR). The helical transmembrane segment at 19–39 (IVSIVMFNFASYLTIGLPLAV) threads the bilayer. Residues 40 to 46 (LPGYVHD) lie on the Periplasmic side of the membrane. The helical transmembrane segment at 47 to 67 (VMGFSAFWAGLVISLQYFATL) threads the bilayer. Topologically, residues 68–84 (LSRPHAGRYADSLGPKK) are cytoplasmic. The helical transmembrane segment at 85-105 (IVVFGLCGCFLSGLGYLTAGL) threads the bilayer. A topological domain (periplasmic) is located at residue T106. The helical transmembrane segment at 107-127 (ASLPVISLLLLCLGRVILGIG) threads the bilayer. Residues 128–155 (QSFAGTGSTLWGVGVVGSLHIGRVISWN) lie on the Cytoplasmic side of the membrane. A helical membrane pass occupies residues 156-176 (GIVTYGAMAMGAPLGVVFYHW). Position 177 (G177) is a topological domain, periplasmic. The helical transmembrane segment at 178 to 198 (GLQALALIIMGVALVAILLAI) threads the bilayer. At 199-223 (PRPTVKASKGKPLPFRAVLGRVWLY) the chain is on the cytoplasmic side. The chain crosses the membrane as a helical span at residues 224 to 244 (GMALALASAGFGVIATFITLF). The Periplasmic portion of the chain corresponds to 245–251 (YDAKGWD). Residues 252–272 (GAAFALTLFSCAFVGTRLLFP) form a helical membrane-spanning segment. The Cytoplasmic portion of the chain corresponds to 273–282 (NGINRIGGLN). Residues 283–303 (VAMICFSVEIIGLLLVGVATM) traverse the membrane as a helical segment. At 304-308 (PWMAK) the chain is on the periplasmic side. Residues 309-329 (IGVLLAGAGFSLVFPALGVVA) form a helical membrane-spanning segment. The Cytoplasmic portion of the chain corresponds to 330–343 (VKAVPQQNQGAALA). A helical transmembrane segment spans residues 344 to 364 (TYTVFMDLSLGVTGPLAGLVM). A topological domain (periplasmic) is located at residue S365. Residues 366 to 386 (WAGVPVIYLAAAGLVAIALLL) form a helical membrane-spanning segment. Over 387–405 (TWRLKKRPPEHVPEAASSS) the chain is Cytoplasmic.

This sequence belongs to the major facilitator superfamily. YhhS family.

It is found in the cell inner membrane. Confers high-level resistance to glyphosate when overexpressed. Overexpression has no effect on intracellular arabinose concentrations. This is an uncharacterized protein from Escherichia coli (strain K12).